A 57-amino-acid chain; its full sequence is Large ribosomal subunit protein bL32c (57 aa).

It belongs to the bacterial ribosomal protein bL32 family.

It localises to the plastid. It is found in the chloroplast. The chain is Large ribosomal subunit protein bL32c from Acorus calamus (Sweet flag).